The primary structure comprises 126 residues: Large ribosomal subunit protein bL12 (126 aa).

This sequence belongs to the bacterial ribosomal protein bL12 family. As to quaternary structure, homodimer. Part of the ribosomal stalk of the 50S ribosomal subunit. Forms a multimeric L10(L12)X complex, where L10 forms an elongated spine to which 2 to 4 L12 dimers bind in a sequential fashion. Binds GTP-bound translation factors.

Its function is as follows. Forms part of the ribosomal stalk which helps the ribosome interact with GTP-bound translation factors. Is thus essential for accurate translation. In Bifidobacterium longum (strain DJO10A), this protein is Large ribosomal subunit protein bL12.